We begin with the raw amino-acid sequence, 274 residues long: Putative pyruvate, phosphate dikinase regulatory protein (274 aa).

Gly151–Thr158 is a binding site for ADP.

This sequence belongs to the pyruvate, phosphate/water dikinase regulatory protein family. PDRP subfamily.

The catalysed reaction is N(tele)-phospho-L-histidyl/L-threonyl-[pyruvate, phosphate dikinase] + ADP = N(tele)-phospho-L-histidyl/O-phospho-L-threonyl-[pyruvate, phosphate dikinase] + AMP + H(+). The enzyme catalyses N(tele)-phospho-L-histidyl/O-phospho-L-threonyl-[pyruvate, phosphate dikinase] + phosphate + H(+) = N(tele)-phospho-L-histidyl/L-threonyl-[pyruvate, phosphate dikinase] + diphosphate. Bifunctional serine/threonine kinase and phosphorylase involved in the regulation of the pyruvate, phosphate dikinase (PPDK) by catalyzing its phosphorylation/dephosphorylation. The sequence is that of Putative pyruvate, phosphate dikinase regulatory protein from Pelagibacter ubique (strain HTCC1062).